A 407-amino-acid chain; its full sequence is Melanoma-associated antigen B6 (407 aa).

A disordered region spans residues 1 to 175 (MPRGHKSKLR…YDVAAEGEDE (175 aa)). Polar residues-rich tracts occupy residues 18-29 (TNGQPQGLTGPQ), 57-71 (DASIPQESQGVSPTG), 94-113 (PSTSRDASVPQESQGASPTG), and 136-155 (PSTSHDVSVPQESQGASPTG). The region spanning 195 to 394 (VKKKACTLAQ…GLYPHLYEDA (200 aa)) is the MAGE domain.

In terms of tissue distribution, expressed in testis. Not expressed in other normal tissues, but is expressed in tumors of different histological origins.

This is Melanoma-associated antigen B6 (MAGEB6) from Homo sapiens (Human).